Reading from the N-terminus, the 337-residue chain is Putative high mobility group B protein 11 (337 aa).

One can recognise an ARID domain in the interval 34–125 (VRNPELFWEM…MLFEFEHLYY (92 aa)). Disordered stretches follow at residues 197-221 (TKRG…QRTG) and 298-337 (AGTS…EVSQ). Residues 215-282 (PKRQRTGYNF…RYKMEILQYR (68 aa)) constitute a DNA-binding region (HMG box). The span at 319 to 329 (TDACTSASSAA) shows a compositional bias: low complexity.

This sequence belongs to the HMGB family.

It is found in the nucleus. Its function is as follows. Binds preferentially DNA with A/T-rich content. The polypeptide is Putative high mobility group B protein 11 (HMGB11) (Arabidopsis thaliana (Mouse-ear cress)).